The chain runs to 274 residues: Nitrogenase iron protein (274 aa).

8 to 15 (GKGGIGKS) serves as a coordination point for ATP. Residue C94 coordinates [4Fe-4S] cluster. An ADP-ribosylarginine; by dinitrogenase reductase ADP-ribosyltransferase modification is found at R97. C131 contributes to the [4Fe-4S] cluster binding site.

It belongs to the NifH/BchL/ChlL family. Homodimer. [4Fe-4S] cluster is required as a cofactor. In terms of processing, the reversible ADP-ribosylation of Arg-97 inactivates the nitrogenase reductase and regulates nitrogenase activity.

The enzyme catalyses N2 + 8 reduced [2Fe-2S]-[ferredoxin] + 16 ATP + 16 H2O = H2 + 8 oxidized [2Fe-2S]-[ferredoxin] + 2 NH4(+) + 16 ADP + 16 phosphate + 6 H(+). Functionally, the key enzymatic reactions in nitrogen fixation are catalyzed by the nitrogenase complex, which has 2 components: the iron protein and the molybdenum-iron protein. The sequence is that of Nitrogenase iron protein from Chlorobium phaeobacteroides (strain DSM 266 / SMG 266 / 2430).